The primary structure comprises 331 residues: Probable allantoicase (331 aa).

This sequence belongs to the allantoicase family.

It carries out the reaction allantoate + H2O = (S)-ureidoglycolate + urea. It functions in the pathway nitrogen metabolism; (S)-allantoin degradation; (S)-ureidoglycolate from allantoate (aminidohydrolase route): step 1/1. The protein is Probable allantoicase of Stutzerimonas stutzeri (strain A1501) (Pseudomonas stutzeri).